Consider the following 921-residue polypeptide: Protein translocase subunit SecA (921 aa).

ATP contacts are provided by residues Gln-86, 104 to 108 (GEGKT), and Asp-497. The span at 829–838 (QQAPQQQPQQ) shows a compositional bias: low complexity. The tract at residues 829 to 921 (QQAPQQQPQQ…CHGAIETQKA (93 aa)) is disordered. The segment covering 839 to 855 (VAPPPRPQPPQPAPQPP) has biased composition (pro residues). Cys-901, Cys-903, Cys-912, and His-913 together coordinate Zn(2+).

This sequence belongs to the SecA family. Monomer and homodimer. Part of the essential Sec protein translocation apparatus which comprises SecA, SecYEG and auxiliary proteins SecDF-YajC and YidC. Zn(2+) is required as a cofactor.

It localises to the cell inner membrane. It is found in the cytoplasm. It catalyses the reaction ATP + H2O + cellular proteinSide 1 = ADP + phosphate + cellular proteinSide 2.. Its function is as follows. Part of the Sec protein translocase complex. Interacts with the SecYEG preprotein conducting channel. Has a central role in coupling the hydrolysis of ATP to the transfer of proteins into and across the cell membrane, serving both as a receptor for the preprotein-SecB complex and as an ATP-driven molecular motor driving the stepwise translocation of polypeptide chains across the membrane. The protein is Protein translocase subunit SecA of Hyphomonas neptunium (strain ATCC 15444).